Reading from the N-terminus, the 216-residue chain is Adenylate kinase (216 aa).

10–15 serves as a coordination point for ATP; that stretch reads GAGKGT. Residues 30–59 are NMP; the sequence is STGDIFRYNIKQGTELGKKAKSYMDQGLLV. AMP is bound by residues threonine 31, arginine 36, 57 to 59, 85 to 88, and glutamine 92; these read LLV and GFPR. The segment at 126–163 is LID; that stretch reads GRRICRECGATFHVQYNPSTKGALCDQCGGELYQRDDD. Position 127 (arginine 127) interacts with ATP. Zn(2+)-binding residues include cysteine 130 and cysteine 133. 136–137 contacts ATP; that stretch reads TF. Residues cysteine 150 and cysteine 153 each contribute to the Zn(2+) site. 2 residues coordinate AMP: arginine 160 and arginine 171. Lysine 199 lines the ATP pocket.

The protein belongs to the adenylate kinase family. Monomer.

It is found in the cytoplasm. It carries out the reaction AMP + ATP = 2 ADP. The protein operates within purine metabolism; AMP biosynthesis via salvage pathway; AMP from ADP: step 1/1. Functionally, catalyzes the reversible transfer of the terminal phosphate group between ATP and AMP. Plays an important role in cellular energy homeostasis and in adenine nucleotide metabolism. This Alkaliphilus oremlandii (strain OhILAs) (Clostridium oremlandii (strain OhILAs)) protein is Adenylate kinase.